Consider the following 81-residue polypeptide: Small ribosomal subunit protein bS18 (81 aa).

It belongs to the bacterial ribosomal protein bS18 family. In terms of assembly, part of the 30S ribosomal subunit. Forms a tight heterodimer with protein bS6.

Its function is as follows. Binds as a heterodimer with protein bS6 to the central domain of the 16S rRNA, where it helps stabilize the platform of the 30S subunit. This chain is Small ribosomal subunit protein bS18, found in Chlamydia muridarum (strain MoPn / Nigg).